Here is a 118-residue protein sequence, read N- to C-terminus: Large ribosomal subunit protein bL19 (118 aa).

It belongs to the bacterial ribosomal protein bL19 family.

This protein is located at the 30S-50S ribosomal subunit interface and may play a role in the structure and function of the aminoacyl-tRNA binding site. This chain is Large ribosomal subunit protein bL19, found in Salinispora tropica (strain ATCC BAA-916 / DSM 44818 / JCM 13857 / NBRC 105044 / CNB-440).